Here is a 156-residue protein sequence, read N- to C-terminus: Peptidyl-prolyl cis-trans isomerase cypE (156 aa).

The PPIase cyclophilin-type domain occupies Thr-2–Ala-155.

This sequence belongs to the cyclophilin-type PPIase family. As to quaternary structure, interacts with snwA.

Its subcellular location is the cytoplasm. The protein resides in the nucleus. The enzyme catalyses [protein]-peptidylproline (omega=180) = [protein]-peptidylproline (omega=0). Functionally, catalyzes the cis-trans isomerization of proline imidic peptide bonds in oligopeptides. Plays a role in protein folding, transport and assembly. This Dictyostelium discoideum (Social amoeba) protein is Peptidyl-prolyl cis-trans isomerase cypE (cypE).